A 1004-amino-acid polypeptide reads, in one-letter code: MSLCEAPVHVGDKELKYFQIPQMLSQLSLLASHHSRGLEFSGGQGESRILRVKVVSGIDLAKKDIFGASDPYVKLSLYVADENRELALVQTKTIKKTLNPKWNEEFYFRVNPSNHRLLFEVFDENRLTRDDFLGQVDVPLSHLPTEDPTMERPYTFKDFLLRPRSHKSRVKGFLRLKMAYMPKNGGQDEENSEQRDDMEHGWEVVDSNDSASQHQEELPPPPLPPGWEEKVDNLGRTYYVNHNNRSTQWHRPSLMDVSSESDNNIRQINQEAAHRRFRSRRHISEDLEPEASEGGGEGPEPWETISEEMNMAGDSLSLALPPPPASPVSRTSPQELSEEVSRRLQITPDSNGEQFSSLIQREPSSRLRSCSVTDTVAEQAHLPPPSTPTRRARSSTVTGGEEPTPSVAYVHTTPGLPSGWEERKDAKGRTYYVNHNNRTTTWTRPIMQLAEDGASGSATNSNNHLVEPQIRRPRSLSSPTVTLSAPLEGAKDSPIRRAVKDTLSNPQSPQPSPYNSPKPQHKVTQSFLPPGWEMRIAPNGRPFFIDHNTKTTTWEDPRLKFPVHMRSKASLNPNDLGPLPPGWEERIHLDGRTFYIDHNSKITQWEDPRLQNPAITGPAVPYSREFKQKYDYFRKKLKKPADIPNRFEMKLHRNNIFEESYRRIMSVKRPDVLKARLWIEFESEKGLDYGGVAREWFFLLSKEMFNPYYGLFEYSATDNYTLQINPNSGLCNEDHLSYFTFIGRVAGLAVFHGKLLDGFFIRPFYKMMLGKQITLNDMESVDSEYYNSLKWILENDPTELDLMFCIDEENFGQTYQVDLKPNGSEIMVTNENKREYIDLVIQWRFVNRVQKQMNAFLEGFTELLPIDLIKIFDENELELLMCGLGDVDVNDWRQHSIYKNGYCPNHPVIQWFWKAVLLMDAEKRIRLLQFVTGTSRVPMNGFAELYGSNGPQLFTIEQWGSPEKLPRAHTCFNRLDLPPYETFEDLREKLLMAVENAQGFEGVD.

A C2 domain is found at 30–154 (LASHHSRGLE…TEDPTMERPY (125 aa)). Disordered regions lie at residues 207–230 (SNDSASQHQEELPPPPLPPGWEEK) and 272–407 (AAHR…TPSV). Positions 221-254 (PPLPPGWEEKVDNLGRTYYVNHNNRSTQWHRPSL) constitute a WW 1 domain. Phosphoserine is present on serine 341. Threonine 347 is modified (phosphothreonine). Composition is skewed to polar residues over residues 347–359 (TPDSNGEQFSSLI) and 366–376 (RLRSCSVTDTV). A Phosphoserine; by WNK1 and WNK4 modification is found at serine 371. Position 396 is a phosphothreonine; by SGK1 (threonine 396). One can recognise a WW 2 domain in the interval 414–447 (PGLPSGWEERKDAKGRTYYVNHNNRTTTWTRPIM). The tract at residues 453–523 (GASGSATNSN…YNSPKPQHKV (71 aa)) is disordered. Serine 475 bears the Phosphoserine mark. Serine 477 bears the Phosphoserine; by SGK1 mark. A phosphoserine mark is found at serine 478, serine 493, serine 504, serine 508, serine 512, and serine 516. Residues 489–500 (GAKDSPIRRAVK) are compositionally biased toward basic and acidic residues. WW domains follow at residues 526–559 (SFLPPGWEMRIAPNGRPFFIDHNTKTTTWEDPRL) and 577–610 (GPLPPGWEERIHLDGRTFYIDHNSKITQWEDPRL). Positions 669 to 1003 (RPDVLKARLW…VENAQGFEGV (335 aa)) constitute an HECT domain. Residue cysteine 971 is the Glycyl thioester intermediate of the active site.

As to quaternary structure, interacts with UBE2E3. Interacts with NDFIP1; this interaction activates the E3 ubiquitin-protein ligase. Interacts with NDFIP2; this interaction activates the E3 ubiquitin-protein ligase. Interacts (via WW domains) with SCN1A. Interacts (via WW domains) with SCN2A. Interacts (via WW domains) with SCN3A. Interacts (via WW domains) with SCN5A. Interacts (via WW domains) with SCN8A. Interacts (via WW domains) with SCN9A. Interacts (via WW domains) with SCN10A. Interacts (via WW domains) with CLCN5. Interacts with SMAD2. Interacts with SMAD3. Interacts with SMAD6. Interacts with SMAD7. The phosphorylated form interacts with 14-3-3 proteins. Interacts with TNK2. Interacts with WNK1. Interacts with SGK1. Interacts (via C2 domain) with NPC2. Interacts with ARRDC4. Interacts with KCNQ1; promotes internalization of KCNQ1. Interacts (via domains WW1, 3 and 4) with USP36; the interaction inhibits ubiquitination of, at least, NTRK1, KCNQ2 and KCNQ3 by NEDD4L. Interacts with PRRG4 (via cytoplasmic domain). Interacts with LDLRAD3; the interaction is direct. Interacts with UBE2D2. Interacts with TTYH2 and TTYH3. Phosphorylated; which impairs interaction with SCNN. Interaction with YWHAH inhibits dephosphorylation. Aldosterone induces Ser-477 phosphorylation by SGK1. Post-translationally, auto-ubiquitinated. Deubiquitinated by USP36, no effect on NEDD4L protein levels. Both proteins interact and regulate each other's ubiquitination levels. Highly expressed in liver and kidney. Also expressed in heart, brain and lung. Isoform 1 is expressed in kidney, lung and gut. Isoform 3 is ubiquitously expressed.

Its subcellular location is the cytoplasm. It is found in the golgi apparatus. The protein localises to the endosome. The protein resides in the multivesicular body. The catalysed reaction is S-ubiquitinyl-[E2 ubiquitin-conjugating enzyme]-L-cysteine + [acceptor protein]-L-lysine = [E2 ubiquitin-conjugating enzyme]-L-cysteine + N(6)-ubiquitinyl-[acceptor protein]-L-lysine.. The enzyme catalyses [E2 ubiquitin-conjugating enzyme]-S-ubiquitinyl-L-cysteine + [acceptor protein]-L-cysteine = [E2 ubiquitin-conjugating enzyme]-L-cysteine + [acceptor protein]-S-ubiquitinyl-L-cysteine.. Its pathway is protein modification; protein ubiquitination. With respect to regulation, activated by NDFIP1- and NDFIP2-binding. In terms of biological role, E3 ubiquitin-protein ligase that mediates the polyubiquitination of lysine and cysteine residues on target proteins and is thereby implicated in the regulation of various signaling pathways including autophagy, innate immunity or DNA repair. Inhibits TGF-beta signaling by triggering SMAD2 and TGFBR1 ubiquitination and proteasome-dependent degradation. Downregulates autophagy and cell growth by ubiquitinating and reducing cellular ULK1 or ASCT2 levels. Promotes ubiquitination and internalization of various plasma membrane channels such as ENaC, SCN2A/Nav1.2, SCN3A/Nav1.3, SCN5A/Nav1.5, SCN9A/Nav1.7, SCN10A/Nav1.8, KCNA3/Kv1.3, KCNH2, EAAT1, KCNQ2/Kv7.2, KCNQ3/Kv7.3 or CLC5. Promotes ubiquitination and degradation of SGK1 and TNK2. Ubiquitinates BRAT1 and this ubiquitination is enhanced in the presence of NDFIP1. Plays a role in dendrite formation by melanocytes. Involved in the regulation of TOR signaling. Ubiquitinates and regulates protein levels of NTRK1 once this one is activated by NGF. Plays a role in antiviral innate immunity by catalyzing 'Lys-29'-linked cysteine ubiquitination of TRAF3, resulting in enhanced 'Lys-48' and 'Lys-63'-linked ubiquitination of TRAF3. Ubiquitinates TTYH2 and TYYH3 and regulates protein levels of TTYH2. The sequence is that of E3 ubiquitin-protein ligase NEDD4-like (Nedd4l) from Mus musculus (Mouse).